Here is a 913-residue protein sequence, read N- to C-terminus: Collagen alpha-2(I) chain (913 aa).

Residues 1–913 form a disordered region; it reads SGGFDFSFLP…FGYEGDFYRA (913 aa). A 4-hydroxyproline mark is found at P10, P13, P35, and P41. Composition is skewed to low complexity over residues 28–67, 125–154, and 199–220; these read LMGPRGPPGASGAPGPQGFQGPAGEPGEPGQTGPAGARGP, VGAPGPAGARGSDGSVGPVGPAGPIGSAGP, and PGANGLTGAKGAAGLPGVAGAP. Over residues 254 to 263 the composition is skewed to gly residues; it reads GESGGKGEPG. Positions 264–274 are enriched in low complexity; the sequence is SAGPQGPPGSS. Residues 281–303 are compositionally biased toward gly residues; sequence GPNGGSTGPTGPPGLRGGPGSRG. The segment covering 316–332 has biased composition (low complexity); the sequence is PAGARGASGPAGVRGPS. A 4-hydroxyproline mark is found at P338 and P341. 2 stretches are compositionally biased toward low complexity: residues 367 to 386 and 408 to 421; these read LPGIDGRPGPIGPAGARGEA and PDGNNGAQGPPGLQ. The span at 422-431 shows a compositional bias: gly residues; sequence GVQGGKGTTG. 2 stretches are compositionally biased toward low complexity: residues 459–476 and 488–498; these read PGESGAVGPSGAIGSRGP and EPGVVGAPGTA. Positions 499 to 517 are enriched in gly residues; sequence GPAGSGGPGERGAAGIPGG. 2 stretches are compositionally biased toward low complexity: residues 527 to 574 and 581 to 601; these read RGEV…PRGS and VGPAGPNGFAGPAGAAGQPGA. The span at 602-611 shows a compositional bias: basic and acidic residues; sequence KGERGTKGPK. Over residues 619–629 the composition is skewed to low complexity; it reads PTGPVGSAGPA. Residues 639 to 648 are compositionally biased toward gly residues; the sequence is GSRGDGGPPG. Residues 650–659 are compositionally biased toward low complexity; the sequence is TGFPGAAGRT. The segment covering 696–705 has biased composition (gly residues); the sequence is GETGAGGPPG. 2 stretches are compositionally biased toward low complexity: residues 713–740 and 748–758; these read SGEPGTAGPPGTAGPQGLLGAPGILGLP and LPGVAGAVGEP. A compositionally biased stretch (gly residues) spans 759-776; the sequence is GPLGIGPPGARGPSGAGK. Low complexity predominate over residues 782–797; it reads EPGPVGSVGPVGALGP. Residues 807–818 show a composition bias toward basic and acidic residues; the sequence is RGDKGEPGEKGP. The segment covering 883–895 has biased composition (pro residues); that stretch reads SGPPGPPGPPGPP.

The protein belongs to the fibrillar collagen family. As to quaternary structure, trimers of one alpha 2(I) and two alpha 1(I) chains. Interacts (via C-terminus) with TMEM131 (via PapD-L domain); the interaction is direct and is involved in assembly and TRAPPIII ER-to-Golgi transport complex-dependent secretion of collagen. Prolines at the third position of the tripeptide repeating unit (G-X-Y) are hydroxylated in some or all of the chains. In terms of tissue distribution, expressed in bones.

It is found in the secreted. The protein localises to the extracellular space. Its subcellular location is the extracellular matrix. Type I collagen is a member of group I collagen (fibrillar forming collagen). The protein is Collagen alpha-2(I) chain of Parocnus serus (Greater Haitian ground sloth).